The primary structure comprises 673 residues: MPRKRSRFELSIHSLLLSVAVLSGAAYASGYYPPSQQVPIIPPQVPLKGAEATPDIHEFSLRHIFHRGTYEQPDFHARLDVKPDTRLRTVSEDGHEEEYIASESSLLASSSPLTIQRLADRRLPVIQGHLAAARSSGFAAALSPQEWALDTLPGPNITDKPTVLTFAQMTANDYIEEPGTGQWHTINGKFNYSGSFGWQKDGLRGHIYSDKTNGTVVISLKGTSPALFDGAGTTTNDKVNDNLYFSCCCGQGGSYLWRQSCDCQSATFTANLTCIIESMTDEDRYYRAAIDLYSNVTEIYPDANIWMTGHSLGGAMTSLVGLTFGLPVVTFEAVPEALPAARLGLPSPPGYDPRFPQSRQYTGAYHFGHTADPVFMGTCNGINSICTWGGYAMESVCHTGQVCTYDTVADKGWRVGLGTHKIENVISDVLMTYDSVPSCVAEEECFDCELWKFFRSNGSEITTTTTTTTTTTSPTRTSTCKTPGWWGCLDESTTATTTTTTTTTSTATTTTCMTPGWFGCNDPTTTTATPAPTVTTTLPTVTSTTTSCHDPGWFGCRDETSTVATTTANPASPTSTACHSPGIFWGCWDEPTSTTAVTSLPAFTSAPISTTCHSPGIFWGCWDEPTSTTAVTSLPAITSTPISTTCHIPGIFWGCWDEPTNTPAVTSAPTPTS.

The Cytoplasmic portion of the chain corresponds to 1 to 7 (MPRKRSR). The helical; Signal-anchor for type II membrane protein transmembrane segment at 8 to 28 (FELSIHSLLLSVAVLSGAAYA) threads the bilayer. Over 29–673 (SGYYPPSQQV…AVTSAPTPTS (645 aa)) the chain is Lumenal. 5 N-linked (GlcNAc...) asparagine glycosylation sites follow: Asn156, Asn191, Asn213, Asn271, and Asn295. The active-site Charge relay system is Ser311. Residue Asn457 is glycosylated (N-linked (GlcNAc...) asparagine).

The protein belongs to the AB hydrolase superfamily. Lipase family. Binds to both phosphatidylinositol (PI) and phosphatidylinositol 3,5-bisphosphate (PIP2).

The protein resides in the endosome. The protein localises to the multivesicular body membrane. Its subcellular location is the prevacuolar compartment membrane. The catalysed reaction is a triacylglycerol + H2O = a diacylglycerol + a fatty acid + H(+). Functionally, lipase which is essential for lysis of subvacuolar cytoplasm to vacuole targeted bodies and intravacuolar autophagic bodies. Involved in the lysis of intravacuolar multivesicular body (MVB) vesicles. The intravacuolar membrane disintegration by atg15 is critical to life span extension. The polypeptide is Putative lipase atg15 (atg15) (Penicillium rubens (strain ATCC 28089 / DSM 1075 / NRRL 1951 / Wisconsin 54-1255) (Penicillium chrysogenum)).